Consider the following 369-residue polypeptide: Anhydro-N-acetylmuramic acid kinase (369 aa).

12 to 19 is a binding site for ATP; it reads GTSMDGVD.

Belongs to the anhydro-N-acetylmuramic acid kinase family.

It carries out the reaction 1,6-anhydro-N-acetyl-beta-muramate + ATP + H2O = N-acetyl-D-muramate 6-phosphate + ADP + H(+). The protein operates within amino-sugar metabolism; 1,6-anhydro-N-acetylmuramate degradation. It functions in the pathway cell wall biogenesis; peptidoglycan recycling. Its function is as follows. Catalyzes the specific phosphorylation of 1,6-anhydro-N-acetylmuramic acid (anhMurNAc) with the simultaneous cleavage of the 1,6-anhydro ring, generating MurNAc-6-P. Is required for the utilization of anhMurNAc either imported from the medium or derived from its own cell wall murein, and thus plays a role in cell wall recycling. In Shewanella putrefaciens (strain CN-32 / ATCC BAA-453), this protein is Anhydro-N-acetylmuramic acid kinase.